A 243-amino-acid chain; its full sequence is R-spondin-2 (243 aa).

A signal peptide spans 1–21 (MQFQLFSFALIILNCVDYSHC). Cystine bridges form between cysteine 40–cysteine 46, cysteine 43–cysteine 52, cysteine 55–cysteine 74, cysteine 78–cysteine 93, cysteine 96–cysteine 104, cysteine 101–cysteine 110, cysteine 113–cysteine 124, cysteine 128–cysteine 141, cysteine 145–cysteine 187, cysteine 156–cysteine 163, and cysteine 196–cysteine 203. An FU repeat occupies 90–134 (MNRCSRCRIENCDSCFSRDFCIKCKSGFYSLKGQCFEECPEGFAP). The region spanning 144–204 (GCEVGPWSEW…RCKMAIRHCP (61 aa)) is the TSP type-1 domain. Asparagine 160 is a glycosylation site (N-linked (GlcNAc...) asparagine). Residues 204 to 224 (PGGKRTTKKKDKRNKKKKKKL) show a composition bias toward basic residues. The segment at 204-243 (PGGKRTTKKKDKRNKKKKKKLLERAQEQHSVVLATDRSSQ) is disordered.

It belongs to the R-spondin family. Binds heparin.

Its subcellular location is the secreted. In terms of biological role, activator of the canonical Wnt signaling pathway by acting as a ligand for lgr4-6 receptors. Upon binding to lgr4-6 (lgr4, lgr5 or lgr6), lgr4-6 associate with phosphorylated lrp6 and frizzled receptors that are activated by extracellular Wnt receptors, triggering the canonical Wnt signaling pathway to increase expression of target genes. Acts both in the canonical Wnt/beta-catenin-dependent pathway and in non-canonical Wnt signaling pathway. Activates neural markers and promotes muscle formation. Overexpression blocks activin, nodal and BMP4 signaling, suggesting that it may negatively regulate the TGF-beta pathway. During embryonic development, plays a crucial role in limb specification, amplifying the Wnt signaling pathway independently of LGR4-6 receptors, possibly by acting as a direct antagonistic ligand to RNF43 and ZNRF3, hence governing the number of limbs an embryo should form. This chain is R-spondin-2 (rspo2), found in Xenopus laevis (African clawed frog).